The primary structure comprises 146 residues: MKYNPRVTSSRRRNRKPHFTASSSERRVXMSSPLSTDLRQKYNVRSMPIRKDDEXQIVRGTYKGREGKLXQVYRRKXVIHIERLTREKVNGTTVNVGVQPTKVVITKLRLDKDRKSLLERKAKGRAAADKDKGTKFTAVDVMQNVX.

The segment at 1-33 (MKYNPRVTSSRRRNRKPHFTASSSERRVXMSSP) is disordered. Over residues 9–18 (SSRRRNRKPH) the composition is skewed to basic residues.

It belongs to the universal ribosomal protein uL24 family.

This chain is Large ribosomal subunit protein uL24 (RPL26), found in Brassica campestris (Field mustard).